A 443-amino-acid polypeptide reads, in one-letter code: uncharacterized protein (443 aa).

Transmembrane regions (helical) follow at residues 7–29, 68–87, 94–111, 121–143, 150–164, 179–201, 206–225, 358–375, 382–399, and 409–431; these read VSLY…MLNT, YISS…SIFT, VLSL…YAIF, VTLF…SMFA, IVII…SLTC, IIST…YIFF, LIIK…FAIS, IRFI…FIRN, LFVV…SFFG, and LFGM…IYKI.

Its subcellular location is the cell membrane. This is an uncharacterized protein from Escherichia coli (strain K12).